A 554-amino-acid polypeptide reads, in one-letter code: Calcium-dependent protein kinase 3 (554 aa).

The disordered stretch occupies residues 30–55 (KKKSSNKSIKSQHKFEGSKIANKNNE). A Protein kinase domain is found at 110–365 (NLSEEPLGKG…ASEALKHPWF (256 aa)). Residues 116 to 124 (LGKGTYGCV) and Lys-139 each bind ATP. Residue Asp-230 is the Proton acceptor of the active site. A J domain autoinhibitory motif motif is present at residues 385-393 (NFKNYALLL). Residues 385–420 (NFKNYALLLKLQKLAMTIIAQQSNDYDLQQLKTVFL) form a j domain region. The J domain EF-hand interaction motif motif lies at 394-403 (KLQKLAMTII). EF-hand domains follow at residues 410–445 (YDLQQLKTVFLYLDEDGKGNITKNQLKKGLENSGLK), 448–479 (QNFDVLLDQIDSDGSGRIDYTEFLAAALDRKH), 480–515 (LSKKLIYCAFRVFDVDNDGEITTAELAHILYNGNKK), and 521–554 (KDVNQVKKMIQEVDKNNDGKIDFYEFCEMMKLKY). Ca(2+) contacts are provided by Asp-458, Asp-460, Ser-462, Arg-464, Glu-469, Asp-493, Asp-495, Asp-497, Glu-499, Glu-504, Asp-534, Asn-536, Asp-538, Lys-540, and Glu-545.

It belongs to the protein kinase superfamily. Ser/Thr protein kinase family. CDPK subfamily. The cofactor is Mg(2+).

Its subcellular location is the cytoplasm. The catalysed reaction is L-seryl-[protein] + ATP = O-phospho-L-seryl-[protein] + ADP + H(+). It catalyses the reaction L-threonyl-[protein] + ATP = O-phospho-L-threonyl-[protein] + ADP + H(+). With respect to regulation, activated by calcium. Upon calcium binding to the EF-hand domain 2, the C-terminus of the junction domain (J domain) undergoes a conformational change which results in the dissociation of the pseudo-substrate inhibitory motif from the catalytic domain. This, in turn, may facilitate the autophosphorylation of the activation loop at Thr-271, which leads to the kinase activation. In terms of biological role, calcium-dependent protein kinase which acts as a sensor and effector of intracellular Ca(2+) levels probably in part downstream of cGMP-activated PKG kinase. In the mosquito midgut, regulates the gliding motility of the ookinete which is essential for the ookinete to invade the midgut epithelium. However, another study showed that while required for ookinete invasion of the midgut epithelium, is not required for ookinete gliding motility. The polypeptide is Calcium-dependent protein kinase 3 (Plasmodium berghei (strain Anka)).